Here is a 260-residue protein sequence, read N- to C-terminus: GTP cyclohydrolase FolE2 (260 aa).

This sequence belongs to the GTP cyclohydrolase IV family.

The enzyme catalyses GTP + H2O = 7,8-dihydroneopterin 3'-triphosphate + formate + H(+). Its pathway is cofactor biosynthesis; 7,8-dihydroneopterin triphosphate biosynthesis; 7,8-dihydroneopterin triphosphate from GTP: step 1/1. Converts GTP to 7,8-dihydroneopterin triphosphate. This is GTP cyclohydrolase FolE2 from Desulfosudis oleivorans (strain DSM 6200 / JCM 39069 / Hxd3) (Desulfococcus oleovorans).